The sequence spans 360 residues: Aminomethyltransferase (360 aa).

Belongs to the GcvT family. The glycine cleavage system is composed of four proteins: P, T, L and H.

The catalysed reaction is N(6)-[(R)-S(8)-aminomethyldihydrolipoyl]-L-lysyl-[protein] + (6S)-5,6,7,8-tetrahydrofolate = N(6)-[(R)-dihydrolipoyl]-L-lysyl-[protein] + (6R)-5,10-methylene-5,6,7,8-tetrahydrofolate + NH4(+). In terms of biological role, the glycine cleavage system catalyzes the degradation of glycine. This chain is Aminomethyltransferase, found in Flavobacterium psychrophilum (strain ATCC 49511 / DSM 21280 / CIP 103535 / JIP02/86).